The sequence spans 263 residues: tRNA1(Val) (adenine(37)-N6)-methyltransferase (263 aa).

It belongs to the methyltransferase superfamily. tRNA (adenine-N(6)-)-methyltransferase family.

It is found in the cytoplasm. It carries out the reaction adenosine(37) in tRNA1(Val) + S-adenosyl-L-methionine = N(6)-methyladenosine(37) in tRNA1(Val) + S-adenosyl-L-homocysteine + H(+). Functionally, specifically methylates the adenine in position 37 of tRNA(1)(Val) (anticodon cmo5UAC). This is tRNA1(Val) (adenine(37)-N6)-methyltransferase from Salmonella choleraesuis (strain SC-B67).